Reading from the N-terminus, the 116-residue chain is Large ribosomal subunit protein uL23 (116 aa).

The protein belongs to the universal ribosomal protein uL23 family. In terms of assembly, part of the 50S ribosomal subunit. Contacts protein L29, and trigger factor when it is bound to the ribosome.

One of the early assembly proteins it binds 23S rRNA. One of the proteins that surrounds the polypeptide exit tunnel on the outside of the ribosome. Forms the main docking site for trigger factor binding to the ribosome. This chain is Large ribosomal subunit protein uL23, found in Psychrobacter sp. (strain PRwf-1).